The following is a 294-amino-acid chain: 2-oxoglutaramate amidase (294 aa).

The 246-residue stretch at 16-261 (LDVAAVQVKF…EAVLRATLNF (246 aa)) folds into the CN hydrolase domain. Glu-55 acts as the Proton acceptor in catalysis. Lys-129 functions as the Proton donor in the catalytic mechanism. Cys-168 functions as the Nucleophile in the catalytic mechanism.

Belongs to the carbon-nitrogen hydrolase superfamily. NIT1/NIT2 family.

It catalyses the reaction 2-oxoglutaramate + H2O = 2-oxoglutarate + NH4(+). The protein operates within alkaloid degradation; nicotine degradation. Catalyzes the conversion of 2-oxoglutaramate to 2-oxoglutarate. Together with glutamate dehydrogenase, may form a physiologically relevant enzyme couple, leading to transformation of metabolically inert 2-oxoglutaramate derived from trihydroxypyridine into glutamate, a central compound of nitrogen metabolism. The protein is 2-oxoglutaramate amidase of Paenarthrobacter nicotinovorans (Arthrobacter nicotinovorans).